The sequence spans 147 residues: Large ribosomal subunit protein uL11 (147 aa).

Belongs to the universal ribosomal protein uL11 family. Part of the ribosomal stalk of the 50S ribosomal subunit. Interacts with L10 and the large rRNA to form the base of the stalk. L10 forms an elongated spine to which L12 dimers bind in a sequential fashion forming a multimeric L10(L12)X complex. One or more lysine residues are methylated.

In terms of biological role, forms part of the ribosomal stalk which helps the ribosome interact with GTP-bound translation factors. This chain is Large ribosomal subunit protein uL11, found in Bacteroides thetaiotaomicron (strain ATCC 29148 / DSM 2079 / JCM 5827 / CCUG 10774 / NCTC 10582 / VPI-5482 / E50).